A 55-amino-acid chain; its full sequence is Large ribosomal subunit protein bL33 (55 aa).

The protein belongs to the bacterial ribosomal protein bL33 family.

This Zymomonas mobilis subsp. mobilis (strain ATCC 31821 / ZM4 / CP4) protein is Large ribosomal subunit protein bL33.